The primary structure comprises 313 residues: MFSEPGKSKFQIDLRRHLRSQNICDNLIHLICEIAEASKYVINAVRTGDLGVAGTSNLYGEEQLALDVLSDRIMRKRLIHSGVVCNIASEEMDEIYQVTTDSNGLYSVAYDPLDGSSLVDVNLAVGTIVSIFSGCDLLQEGRKQVAAMYILYGPRVSLVYTVGDGVHEFTMNQLMEFNLTRENIRMQPDGNIYSPGGLRNKYNEGDEKFIRYLEAKGCKLRYSGGFVPDINQVLMKGKGLFMYPALNGSPNGKLRLLFELNPMAFIIEHAGGAATNGKIPILDIKPEGLDQRAPIYIGCVEDVNRAMEYVYKS.

The Mg(2+) site is built by glutamate 90, aspartate 111, leucine 113, and aspartate 114. Residues 114-117, tyrosine 222, and lysine 253 each bind substrate; that span reads DGSS. Glutamate 259 lines the Mg(2+) pocket.

Belongs to the FBPase class 1 family. As to quaternary structure, homotetramer. Mg(2+) is required as a cofactor.

The protein resides in the cytoplasm. The enzyme catalyses beta-D-fructose 1,6-bisphosphate + H2O = beta-D-fructose 6-phosphate + phosphate. It participates in carbohydrate biosynthesis; gluconeogenesis. The polypeptide is Fructose-1,6-bisphosphatase class 1 (Geotalea uraniireducens (strain Rf4) (Geobacter uraniireducens)).